A 65-amino-acid polypeptide reads, in one-letter code: Keratin-associated protein 20-2 (65 aa).

The protein belongs to the KRTAP type 20 family. Interacts with hair keratins.

In the hair cortex, hair keratin intermediate filaments are embedded in an interfilamentous matrix, consisting of hair keratin-associated proteins (KRTAP), which are essential for the formation of a rigid and resistant hair shaft through their extensive disulfide bond cross-linking with abundant cysteine residues of hair keratins. The matrix proteins include the high-sulfur and high-glycine-tyrosine keratins. The sequence is that of Keratin-associated protein 20-2 (KRTAP20-2) from Homo sapiens (Human).